The chain runs to 264 residues: MSNSNIHPTSLIAEKAKLGKNVKIGPYCIIGPEVVLHDNVELKSHVVIEGITEIGENTVIYPFASIGQPPQILKYANERSNTIIGSNNTIREYVTVQAGSQGGGMVTRVGNNNLFMVGVHIGHDCKIGNNVVFANYVSLAGHIEVGDYAIIGGLSAVHQYARIGEYSMIGGLSPVGADVIPFGLVSSKRAVLEGLNLIGMNRKGFDKADSLSALKAIEEIFSGEGNFAERIKQVAEKYKNNSIVMQIIDFLNQDSSRAFCRFEK.

This sequence belongs to the transferase hexapeptide repeat family. LpxA subfamily. In terms of assembly, homotrimer.

The protein resides in the cytoplasm. The enzyme catalyses a (3R)-hydroxyacyl-[ACP] + UDP-N-acetyl-alpha-D-glucosamine = a UDP-3-O-[(3R)-3-hydroxyacyl]-N-acetyl-alpha-D-glucosamine + holo-[ACP]. It functions in the pathway glycolipid biosynthesis; lipid IV(A) biosynthesis; lipid IV(A) from (3R)-3-hydroxytetradecanoyl-[acyl-carrier-protein] and UDP-N-acetyl-alpha-D-glucosamine: step 1/6. Functionally, involved in the biosynthesis of lipid A, a phosphorylated glycolipid that anchors the lipopolysaccharide to the outer membrane of the cell. This is Acyl-[acyl-carrier-protein]--UDP-N-acetylglucosamine O-acyltransferase from Rickettsia felis (strain ATCC VR-1525 / URRWXCal2) (Rickettsia azadi).